The sequence spans 219 residues: Cytidylate kinase (219 aa).

10-18 (GPAAAGKST) contributes to the ATP binding site.

This sequence belongs to the cytidylate kinase family. Type 1 subfamily.

The protein resides in the cytoplasm. It carries out the reaction CMP + ATP = CDP + ADP. The enzyme catalyses dCMP + ATP = dCDP + ADP. This is Cytidylate kinase from Staphylococcus aureus (strain JH9).